The chain runs to 128 residues: Transcription antitermination protein NusB (128 aa).

It belongs to the NusB family.

Its function is as follows. Involved in transcription antitermination. Required for transcription of ribosomal RNA (rRNA) genes. Binds specifically to the boxA antiterminator sequence of the ribosomal RNA (rrn) operons. The polypeptide is Transcription antitermination protein NusB (Exiguobacterium sp. (strain ATCC BAA-1283 / AT1b)).